A 1031-amino-acid polypeptide reads, in one-letter code: Error-prone DNA polymerase (1031 aa).

It belongs to the DNA polymerase type-C family. DnaE2 subfamily.

The protein resides in the cytoplasm. The enzyme catalyses DNA(n) + a 2'-deoxyribonucleoside 5'-triphosphate = DNA(n+1) + diphosphate. DNA polymerase involved in damage-induced mutagenesis and translesion synthesis (TLS). It is not the major replicative DNA polymerase. The chain is Error-prone DNA polymerase from Pseudomonas syringae pv. tomato (strain ATCC BAA-871 / DC3000).